The chain runs to 461 residues: pre-mRNA splicing regulator USH1G (461 aa).

3 ANK repeats span residues 31–60 (DGMT…DPDK), 64–93 (WGNT…NIWC), and 97–126 (DYHT…KQSS). Residues 329-368 (LGREDGGLDGAGTPRGRLHSSPSLDDDSLGSANSLQDRSC) are disordered. Residues 385–447 (LEPETSPLET…KILGAVRRRR (63 aa)) enclose the SAM domain. The residue at position 422 (serine 422) is a Phosphoserine.

As to quaternary structure, part of a complex composed of USH1C, USH1G and MYO7A. Interacts with USH1C (via the first PDZ domain). Interacts with PDZD7. Interacts with CDH23 and PCDH15; these interactions may recruit USH1G to the plasma membrane. Interacts with intraflagellar transport proteins IFT20, IFT52 and IFT57. Interacts with splicing factors SF3B1, PRPF6, PRPF31 and SON. Interacts with the U4/U6.U5 tri-small nuclear ribonucleoprotein (tri-snRNP) complex in the presence of pre-mRNAs. Interacts (via SAM domain) with MAGI2 (via PDZ 6 domain); the interaction is triggered by phosphorylation of USH1G by CK2 and negatively regulates MAGI2-mediated endocytosis. In terms of tissue distribution, detected in stereocilia from cochlear hair cells (at protein level). Detected in retinal photoreceptor cell cilia (at protein level). Highly expressed in the cochlea, testis, cerebellum and eye, and low levels in brain, thymus and spleen. Significant signals detected in the neurosensory epithelium of inner ear cochlea and saccule, especially in inner and outer hair cells.

The protein localises to the cytoplasm. Its subcellular location is the cytosol. The protein resides in the cytoskeleton. It localises to the cell membrane. It is found in the cell projection. The protein localises to the cilium. Its subcellular location is the nucleus speckle. The protein resides in the nucleus. It localises to the cajal body. It is found in the microtubule organizing center. The protein localises to the centrosome. Its subcellular location is the photoreceptor inner segment. Its function is as follows. Plays a role in pre-mRNA splicing by regulating the release and transfer of U4/U6.U5 tri-small nuclear ribonucleoprotein (tri-snRNP) complexes from their assembly site in Cajal bodies to nuclear speckles, thereby contributing to the assembly of the pre-catalytic spliceosome on target pre-mRNAs. May also participate in recycling of snRNPs back to Cajal bodies during splicing. Plays a role in regulating MAGI2-mediated endocytosis. Anchoring/scaffolding protein that is a part of the functional network formed by USH1C, USH1G, CDH23 and MYO7A that mediates mechanotransduction in cochlear hair cells. Required for normal development and maintenance of cochlear hair cell bundles. Required for normal hearing. This Mus musculus (Mouse) protein is pre-mRNA splicing regulator USH1G (Ush1g).